A 1235-amino-acid polypeptide reads, in one-letter code: Chitin synthase 4 (1235 aa).

The span at 1–11 shows a compositional bias: pro residues; it reads MSLPRRPGPSP. A disordered region spans residues 1–203; it reads MSLPRRPGPS…ASKGKREKSG (203 aa). At 1–212 the chain is on the cytoplasmic side; that stretch reads MSLPRRPGPS…GGLPTPSFWN (212 aa). Basic residues predominate over residues 19-28; it reads YRQSGSRRSR. A compositionally biased stretch (polar residues) spans 46–59; that stretch reads PSQQQRVPSISSFP. Positions 94-107 are enriched in basic and acidic residues; the sequence is IRPERNRIGKDHPN. The span at 116–125 shows a compositional bias: polar residues; sequence NMNTLPSSTG. Positions 169-187 are enriched in basic and acidic residues; that stretch reads ETEKSGDERRRRRKSDTTK. Residues 188 to 199 show a composition bias toward basic residues; it reads HGKIVKASKGKR. A helical transmembrane segment spans residues 213-233; sequence IYCGFVTFWCPGFVLKCFGMP. Topologically, residues 234 to 244 are extracellular; that stretch reads EMAQQRAWREK. The chain crosses the membrane as a helical span at residues 245 to 265; the sequence is MGLISIILLIMGFVGFITFGF. At 266 to 514 the chain is on the cytoplasmic side; sequence TQVVCGKPPL…ASKVVLYVSL (249 aa). The chain crosses the membrane as a helical span at residues 515–535; the sequence is VLILAVVLARFVLALIFQWFI. The Extracellular portion of the chain corresponds to 536 to 1065; sequence SKTYAAAKTS…SMQFIVGIEL (530 aa). A disordered region spans residues 545-592; sequence SQTSDQRKRNRQIEDWTEDIYRAPPRLPGEVGSSVAGSSDRQSKRSSA. Residues 549–558 show a composition bias toward basic and acidic residues; sequence DQRKRNRQIE. N-linked (GlcNAc...) asparagine glycosylation occurs at Asn639. Residues 645 to 670 are disordered; it reads FLKSDAYGSSSSPADGPGPAGFIHEA. A compositionally biased stretch (low complexity) spans 648-665; that stretch reads SDAYGSSSSPADGPGPAG. An N-linked (GlcNAc...) asparagine glycan is attached at Asn1034. A helical transmembrane segment spans residues 1066–1086; the sequence is IGTLVLPAAIAFTFYVVIISI. The Cytoplasmic segment spans residues 1087 to 1092; that stretch reads INSPPQ. A helical transmembrane segment spans residues 1093-1113; it reads IIPLVLLGLILGLPAILVVVT. Residues 1114-1116 lie on the Extracellular side of the membrane; it reads AHS. The helical transmembrane segment at 1117–1137 threads the bilayer; it reads WSYIIWMFIYLLSLPVWNFVL. Topologically, residues 1138-1235 are cytoplasmic; that stretch reads PTYAFWKFDD…RHFDDYFSDA (98 aa). Residues 1201–1235 form a disordered region; that stretch reads RDNVISGVGGSNGWGSSQPRGHEQGRHFDDYFSDA. A compositionally biased stretch (basic and acidic residues) spans 1220–1235; sequence RGHEQGRHFDDYFSDA.

The protein belongs to the chitin synthase family. Class IV subfamily.

It is found in the cell membrane. It catalyses the reaction [(1-&gt;4)-N-acetyl-beta-D-glucosaminyl](n) + UDP-N-acetyl-alpha-D-glucosamine = [(1-&gt;4)-N-acetyl-beta-D-glucosaminyl](n+1) + UDP + H(+). Functionally, polymerizes chitin, a structural polymer of the cell wall and septum, by transferring the sugar moiety of UDP-GlcNAc to the non-reducing end of the growing chitin polymer. This is Chitin synthase 4 (chs-4) from Neurospora crassa (strain ATCC 24698 / 74-OR23-1A / CBS 708.71 / DSM 1257 / FGSC 987).